A 600-amino-acid polypeptide reads, in one-letter code: MNHQKYIRNFSIIAHIDHGKSTLADRLIEHCGGLQAREMSQQVLDSMDIEKERGITIKAQTVRLVYKAKDGNNYYLNLMDTPGHVDFAYEVSRSLAACEGSLLVVDSTQGVEAQTLANVYQAIENDHEIVLVLNKLDLPASEPEQVKQQIEDIIGIDTSEAVLISAKSGIGIDLVLEAIVNKLPPPKESSSDILKALLVDSWYDPYLGVVILVRVIDGYLRKNMRIKMMATNSVYTVENVGYFTPKKHISDVLHAGEIGFFTAAIKQVADCKVGDTITDEKKPCEQALPGFKPNLPVVFCGLYPTDSSEFEHLKDSLAKLRLNDASFEYEMESSSALGVGFRCGFLGLLHLEIIQERLSREFDLDLITTAPSVVYKIHMRDGENLEIHNPADLPDLQKIESMEEPWIKATIMVPDEFLGAVLSLCTEKRGMQLDHSYIANRAKIIYKLPLNEIVYDFYDRLKSCSKGYASFEWQMDVYEPSELVKLGILVNAEVVDALSTIVHRSRAEQRGRALCVRLKDLIPRQQIDIAIQASIGSRIIARETIKALRKDVLSKCYGGDISRKRKLLEKQKAGKKRMRQYGNIEIPQSAFIAALKIGDE.

Positions 5 to 187 (KYIRNFSIIA…AIVNKLPPPK (183 aa)) constitute a tr-type G domain. Residues 17 to 22 (DHGKST) and 134 to 137 (NKLD) each bind GTP.

It belongs to the TRAFAC class translation factor GTPase superfamily. Classic translation factor GTPase family. LepA subfamily.

The protein resides in the cell inner membrane. It carries out the reaction GTP + H2O = GDP + phosphate + H(+). Its function is as follows. Required for accurate and efficient protein synthesis under certain stress conditions. May act as a fidelity factor of the translation reaction, by catalyzing a one-codon backward translocation of tRNAs on improperly translocated ribosomes. Back-translocation proceeds from a post-translocation (POST) complex to a pre-translocation (PRE) complex, thus giving elongation factor G a second chance to translocate the tRNAs correctly. Binds to ribosomes in a GTP-dependent manner. The protein is Elongation factor 4 of Rickettsia conorii (strain ATCC VR-613 / Malish 7).